We begin with the raw amino-acid sequence, 58 residues long: Histatherin (58 aa).

Residues 1–19 (MKIFIFIFIMALILAMIRA) form the signal peptide.

Belongs to the histatin/statherin family. Expressed in mammary glands.

It localises to the secreted. This is Histatherin from Bos taurus (Bovine).